Consider the following 103-residue polypeptide: Large ribosomal subunit protein bL21 (103 aa).

The protein belongs to the bacterial ribosomal protein bL21 family. In terms of assembly, part of the 50S ribosomal subunit. Contacts protein L20.

This protein binds to 23S rRNA in the presence of protein L20. This chain is Large ribosomal subunit protein bL21, found in Shigella sonnei (strain Ss046).